The following is a 372-amino-acid chain: Heat-inducible transcription repressor HrcA (372 aa).

Residues 296 to 331 are disordered; sequence VSSGYGRSGEAGEPAGNDPVGEPETESETESQTNDM.

The protein belongs to the HrcA family.

Negative regulator of class I heat shock genes (grpE-dnaK-dnaJ and groELS operons). Prevents heat-shock induction of these operons. The protein is Heat-inducible transcription repressor HrcA of Bifidobacterium longum subsp. infantis (strain ATCC 15697 / DSM 20088 / JCM 1222 / NCTC 11817 / S12).